A 337-amino-acid chain; its full sequence is UDP-3-O-acylglucosamine N-acyltransferase (337 aa).

Residue H238 is the Proton acceptor of the active site.

This sequence belongs to the transferase hexapeptide repeat family. LpxD subfamily. In terms of assembly, homotrimer.

It carries out the reaction a UDP-3-O-[(3R)-3-hydroxyacyl]-alpha-D-glucosamine + a (3R)-hydroxyacyl-[ACP] = a UDP-2-N,3-O-bis[(3R)-3-hydroxyacyl]-alpha-D-glucosamine + holo-[ACP] + H(+). The protein operates within bacterial outer membrane biogenesis; LPS lipid A biosynthesis. In terms of biological role, catalyzes the N-acylation of UDP-3-O-acylglucosamine using 3-hydroxyacyl-ACP as the acyl donor. Is involved in the biosynthesis of lipid A, a phosphorylated glycolipid that anchors the lipopolysaccharide to the outer membrane of the cell. This Xanthomonas oryzae pv. oryzae (strain MAFF 311018) protein is UDP-3-O-acylglucosamine N-acyltransferase.